The primary structure comprises 883 residues: Serine/threonine-protein phosphatase BSL1 homolog (883 aa).

Kelch repeat units lie at residues 64 to 113 (ASSG…AVGT), 221 to 271 (MLLL…VFVG), 273 to 323 (RLHV…DHDA), and 341 to 387 (QIYI…NRNH). Disordered regions lie at residues 381–402 (ENQN…STDK), 430–466 (SHAS…SLEP), and 499–525 (NESR…QRSP). Positions 385-399 (RNHNFNSDSPTTNNS) are enriched in polar residues. The Mn(2+) site is built by Asp-586, His-588, Asp-620, and Asn-652. The active-site Proton donor is His-653. Mn(2+) is bound by residues His-705 and His-784. A disordered region spans residues 861–883 (QRPPTPTRGRPQSASDRNSLAYI). The span at 872–883 (QSASDRNSLAYI) shows a compositional bias: polar residues.

This sequence belongs to the PPP phosphatase family. BSU subfamily. In terms of assembly, interacts with the phosphorylated form of BSK3. The cofactor is Mn(2+).

It is found in the nucleus. It catalyses the reaction O-phospho-L-seryl-[protein] + H2O = L-seryl-[protein] + phosphate. It carries out the reaction O-phospho-L-threonyl-[protein] + H2O = L-threonyl-[protein] + phosphate. The chain is Serine/threonine-protein phosphatase BSL1 homolog (BSL1) from Oryza sativa subsp. japonica (Rice).